The chain runs to 153 residues: Large ribosomal subunit protein uL22 (153 aa).

This sequence belongs to the universal ribosomal protein uL22 family. In terms of assembly, part of the 50S ribosomal subunit.

In terms of biological role, this protein binds specifically to 23S rRNA. It makes multiple contacts with different domains of the 23S rRNA in the assembled 50S subunit and ribosome. The globular domain of the protein is located near the polypeptide exit tunnel on the outside of the subunit, while an extended beta-hairpin is found that lines the wall of the exit tunnel in the center of the 70S ribosome. The protein is Large ribosomal subunit protein uL22 of Methanococcus aeolicus (strain ATCC BAA-1280 / DSM 17508 / OCM 812 / Nankai-3).